The chain runs to 243 residues: NAD-dependent protein deacetylase (243 aa).

A Deacetylase sirtuin-type domain is found at 1–243 (MKHDLETLKH…VSVVKSLMTE (243 aa)). Residues Ala-24, Phe-35, Arg-36, Gln-105, Ile-107, Asp-108, and His-123 each contribute to the NAD(+) site. Residue Phe-35 coordinates nicotinamide. Residues Ile-107 and Asp-108 each contribute to the nicotinamide site. Catalysis depends on His-123, which acts as the Proton acceptor. Residues Cys-131, Cys-134, Cys-151, and Cys-154 each contribute to the Zn(2+) site. Residues Ser-192, Ser-193, Asn-215, and Asp-232 each contribute to the NAD(+) site.

This sequence belongs to the sirtuin family. Class U subfamily. Requires Zn(2+) as cofactor.

The protein localises to the cytoplasm. It catalyses the reaction N(6)-acetyl-L-lysyl-[protein] + NAD(+) + H2O = 2''-O-acetyl-ADP-D-ribose + nicotinamide + L-lysyl-[protein]. Its function is as follows. NAD-dependent protein deacetylase which modulates the activities of several enzymes which are inactive in their acetylated form. The sequence is that of NAD-dependent protein deacetylase from Staphylococcus aureus (strain COL).